A 583-amino-acid chain; its full sequence is MEAAKVYTQDGTVDLQGRPVLASKTGRWRACSFLLGYEAFERMAFYGIASNLVNYLTKRLHEDTISSVRNVNNWSGAVWITPIAGAYIADSYIGRFWTFTASSLIYVLGMILLTMAVTVKSLRPTCENGVCNKASSLQVTFFYISLYTIAIGAGGTKPNISTFGADQFDSYSIEEKKQKVSFFNWWMFSSFLGALFATLGLVYIQENLGWGLGYGIPTVGLLVSLVVFYIGTPFYRHKVIKTDNLAKDLVQVPIAAFKNRKLQCPDDHLELYELDSHYYKSNGKHQVHHTPVFRFLDKAAIKTSSRVPCTVTKVEVAKRVLGLIFIWLVTLIPSTLWAQVNTLFVKQGTTLDRKIGSNFQIPAASLGSFVTLSMLLSVPMYDQSFVPFMRKKTGNPRGITLLQRLGVGFAIQIVAIAIASAVEVKRMRVIKEFHITSPTQVVPMSIFWLLPQYSLLGIGDVFNAIGLLEFFYDQSPEEMQSLGTTFFTSGIGLGNFLNSFLVTMIDKITSKGGGKSWIGNNLNDSRLDYYYGFLVVISIVNMGLFVWAASKYVYKSDDDTKEFSGGGCVQMEAKALDTSPLSI.

Residues 74-94 (WSGAVWITPIAGAYIADSYIG) traverse the membrane as a helical segment. A Phosphothreonine modification is found at threonine 98. 10 helical membrane passes run 99 to 119 (FTAS…AVTV), 134 to 154 (ASSL…IGAG), 182 to 202 (FFNW…LGLV), 210 to 230 (WGLG…VFYI), 320 to 340 (VLGL…WAQV), 361 to 381 (IPAA…VPMY), 405 to 425 (LGVG…VEVK), 446 to 466 (IFWL…NAIG), 485 to 505 (TFFT…VTMI), and 529 to 549 (YYYG…VWAA).

Belongs to the major facilitator superfamily. Proton-dependent oligopeptide transporter (POT/PTR) (TC 2.A.17) family. As to expression, expressed in flowers. Detected in stems, leaves and siliques.

It is found in the membrane. This chain is Protein NRT1/ PTR FAMILY 5.1 (NPF5.1), found in Arabidopsis thaliana (Mouse-ear cress).